The following is a 130-amino-acid chain: Lysozyme C (130 aa).

One can recognise a C-type lysozyme domain in the interval 1-130; sequence KVWERCALAR…VEQYVEGCDL (130 aa). Intrachain disulfides connect Cys-6/Cys-128, Cys-30/Cys-116, Cys-65/Cys-81, and Cys-77/Cys-95. Active-site residues include Glu-35 and Asp-53.

The protein belongs to the glycosyl hydrolase 22 family. As to quaternary structure, monomer.

The enzyme catalyses Hydrolysis of (1-&gt;4)-beta-linkages between N-acetylmuramic acid and N-acetyl-D-glucosamine residues in a peptidoglycan and between N-acetyl-D-glucosamine residues in chitodextrins.. In terms of biological role, lysozymes have primarily a bacteriolytic function; those in tissues and body fluids are associated with the monocyte-macrophage system and enhance the activity of immunoagents. The sequence is that of Lysozyme C (LYZ) from Camelus dromedarius (Dromedary).